The sequence spans 166 residues: Putative methyltransferase Rv1506c (166 aa).

It belongs to the methyltransferase superfamily.

Functionally, probably plays a role in host phagosome maturation arrest, as well as a role in the synthesis of acyltrehalose-containing glycolipids. The polypeptide is Putative methyltransferase Rv1506c (Mycobacterium tuberculosis (strain ATCC 25618 / H37Rv)).